The following is a 1218-amino-acid chain: Structural maintenance of chromosomes protein 2 (1218 aa).

32–39 (GLNGSGKS) is a binding site for ATP. A coiled-coil region spans residues 209-517 (VKLKKEKEEY…INSVKIDYKI (309 aa)). The SMC hinge domain occupies 525 to 654 (DVLGQIYKLI…CSNVDLCKKI (130 aa)). Coiled coils occupy residues 693 to 949 (LNYE…DTVK) and 978 to 1045 (RHDV…KKSE).

This sequence belongs to the SMC family. SMC2 subfamily.

It localises to the nucleus. Its function is as follows. May play a role in the conversion of interphase chromatin into condensed chromosomes. The sequence is that of Structural maintenance of chromosomes protein 2 from Plasmodium falciparum (isolate 3D7).